The following is a 354-amino-acid chain: Malate dehydrogenase 2, peroxisomal (354 aa).

The segment at 10-18 (RIARISAHL) is peroxisomal targeting signal PTS2. NAD(+) contacts are provided by residues 49–55 (GAAGGIG) and Asp75. Substrate contacts are provided by Arg122 and Arg128. Residues Asn135 and 158-160 (ISN) contribute to the NAD(+) site. The substrate site is built by Asn160 and Arg194. His218 acts as the Proton acceptor in catalysis. Residue Met269 participates in NAD(+) binding.

It belongs to the LDH/MDH superfamily. MDH type 1 family. As to quaternary structure, homodimer. Expressed in rosette leaves.

It localises to the peroxisome. It catalyses the reaction (S)-malate + NAD(+) = oxaloacetate + NADH + H(+). Functionally, catalyzes a reversible NAD-dependent dehydrogenase reaction involved in central metabolism and redox homeostasis between organelle compartments. Peroxisomal NAD-dependent malate dehydrogenase involved in fatty acid beta-oxidation. Reoxidizes NADH from the beta-oxidation and provides NAD for the conversion of fatty acyl-CoA to acetyl-CoA. Does not participate directly in the glyoxylate cycle. Required for maintenance of photosynthetic rates under photorespiratory conditions, and carbon flow during photorespiration. Supplies NADH reductant to the peroxisomal hydroxypyruvate reductase (HPR), which reduces hydroxypyruvate into glycerate in the photorespiratory cycle. This Arabidopsis thaliana (Mouse-ear cress) protein is Malate dehydrogenase 2, peroxisomal.